Reading from the N-terminus, the 457-residue chain is MSLPFNTGIFSVSRLNQTVRQLLEMEMGRIWLSAEISNFSHPSSGHWYFTLKDERAQVRAAMFRSSNQRVTFRPQNGQQVLVRAIITLYEPRGDYQLIVENMQPAGDGLLQQQFELLKQKLDAEGLFDQSHKKPLPSPAQQLGVITSTSGAALHDILNILKRRDPSLPIIIYPTSVQGAEAPLQIIRAIELANERRECDVLIVGRGGGSLEDLWSFNDERVARAIFHSDIPIVSAVGHETDVTIADFVADLRAPTPSAAAELVSRNQLELLRQIQSQQQRLEMAMDYFFAQKQHIFSLLSHRLQQQHPHLRLARQQNLLVNLRQRLTDSLQRYLKQNSLAYEKLQQRLWYAEPSQQIHHYSQQIQQQDFRLRQAIERQISRSREKFAVSCSRMEAVSPLATLARGYSISQTSDGKLLKQTKQVDVGDVLNTRLQDGWIESEVLKIKKERKKRSANLK.

Belongs to the XseA family. Heterooligomer composed of large and small subunits.

Its subcellular location is the cytoplasm. It catalyses the reaction Exonucleolytic cleavage in either 5'- to 3'- or 3'- to 5'-direction to yield nucleoside 5'-phosphates.. Bidirectionally degrades single-stranded DNA into large acid-insoluble oligonucleotides, which are then degraded further into small acid-soluble oligonucleotides. In Photorhabdus laumondii subsp. laumondii (strain DSM 15139 / CIP 105565 / TT01) (Photorhabdus luminescens subsp. laumondii), this protein is Exodeoxyribonuclease 7 large subunit.